The following is a 78-amino-acid chain: Large ribosomal subunit protein bL28 (78 aa).

Belongs to the bacterial ribosomal protein bL28 family.

In Hamiltonella defensa subsp. Acyrthosiphon pisum (strain 5AT), this protein is Large ribosomal subunit protein bL28.